The primary structure comprises 625 residues: MSRTSNRESLAALTLGAMGVVYGDIGTSPLYTMKEVFSPATGVPLDGVHLIGAVSVIFWGLMMVVTLKYVLLILRADNRGEGGIMALTALAANAAGKTARRRTVLLLMGVFGAALFYGDSVITPAISVLSAVEGLEVVTPAFKSYVLPISVTVLIGLFAVQRFGTSLVGKLFGPVIMLWFAVLSVTGVAEIIQQPAILAALNPLNAFEFLRSQGWHMFVAVGAIVLAFTGVEALYADMGHFGKRPIQLAWLGLVLPALAINYMGQGALLMRDPSALANPFYRLFPQAWLMPAVVLATLATVIASQAVISGAYSMTKQAVLLGLLPRMQVQYTSAKEIGQIYMPEVNWLLLISVLLAVVGFGSSSALASAYGIAVTMTMLITTALTFFVVRDGWGYPLPVALAATAVFLALDTLLVVSCSLKFFQGGWFPLVLGLVIFTVMATWRRGRELLIDNIRHDDPELLPFITALSADVVHRVPRTAVYTVANPDTVPQALMHNLKHNQVLHERNVILTVVFHDVPWIAFDERVQVKPLVPGFWKVQVNYGFKNAPDIPRALELCQSQGLSINLFETSYFLSREIVVPTKGAGMAHWREALFAIMSRNAGSVADFFRLPNNCVIELGTRVQI.

A run of 12 helical transmembrane segments spans residues 10–30 (LAALTLGAMGVVYGDIGTSPL), 47–67 (GVHLIGAVSVIFWGLMMVVTL), 104–124 (VLLLMGVFGAALFYGDSVITP), 140–160 (PAFKSYVLPISVTVLIGLFAV), 172–192 (FGPVIMLWFAVLSVTGVAEII), 214–234 (GWHMFVAVGAIVLAFTGVEAL), 250–270 (WLGLVLPALAINYMGQGALLM), 283–303 (LFPQAWLMPAVVLATLATVIA), 347–367 (WLLLISVLLAVVGFGSSSALA), 369–389 (AYGIAVTMTMLITTALTFFVV), 396–416 (PLPVALAATAVFLALDTLLVV), and 422–442 (FFQGGWFPLVLGLVIFTVMAT).

It belongs to the HAK/KUP transporter (TC 2.A.72) family.

Its subcellular location is the cell inner membrane. The enzyme catalyses K(+)(in) + H(+)(in) = K(+)(out) + H(+)(out). Functionally, transport of potassium into the cell. Likely operates as a K(+):H(+) symporter. The chain is Probable potassium transport system protein Kup 2 from Albidiferax ferrireducens (strain ATCC BAA-621 / DSM 15236 / T118) (Rhodoferax ferrireducens).